Consider the following 368-residue polypeptide: 3-isopropylmalate dehydrogenase (368 aa).

79 to 92 contacts NAD(+); sequence GPRYEGLPWDLRPE. Residues R99, R109, R138, and D228 each coordinate substrate. Mg(2+) contacts are provided by D228, D252, and D256. An NAD(+)-binding site is contributed by 292–304; it reads GSAPDIAGQDRAN.

It belongs to the isocitrate and isopropylmalate dehydrogenases family. LeuB type 1 subfamily. Homodimer. Requires Mg(2+) as cofactor. It depends on Mn(2+) as a cofactor.

Its subcellular location is the cytoplasm. The enzyme catalyses (2R,3S)-3-isopropylmalate + NAD(+) = 4-methyl-2-oxopentanoate + CO2 + NADH. Its pathway is amino-acid biosynthesis; L-leucine biosynthesis; L-leucine from 3-methyl-2-oxobutanoate: step 3/4. Functionally, catalyzes the oxidation of 3-carboxy-2-hydroxy-4-methylpentanoate (3-isopropylmalate) to 3-carboxy-4-methyl-2-oxopentanoate. The product decarboxylates to 4-methyl-2 oxopentanoate. This chain is 3-isopropylmalate dehydrogenase, found in Symbiobacterium thermophilum (strain DSM 24528 / JCM 14929 / IAM 14863 / T).